The following is a 116-amino-acid chain: Acyl-CoA-binding protein homolog 3 (116 aa).

The region spanning 3 to 92 (LQEKFDAAVE…LNDMFDKIAE (90 aa)) is the ACB domain. Residues 34 to 38 (YSLFK), lysine 60, and tyrosine 79 contribute to the an acyl-CoA site.

It belongs to the ACBP family.

Its function is as follows. Binds medium- and long-chain acyl-CoA esters with very high affinity and may function as an intracellular carrier of acyl-CoA esters. The chain is Acyl-CoA-binding protein homolog 3 (acbp-3) from Caenorhabditis elegans.